Reading from the N-terminus, the 97-residue chain is MSRKCELTGVSVLYGNNVSHSQRKTRRRFEPNLRSVKFRSDITDEVYRLSVNARCIRSVEKAGGFDEYILKANNDVLSSTARAIKQKIIDIKAVESL.

The protein belongs to the bacterial ribosomal protein bL28 family.

This is Large ribosomal subunit protein bL28 from Rickettsia typhi (strain ATCC VR-144 / Wilmington).